The following is a 230-amino-acid chain: UPF0173 metal-dependent hydrolase RSKD131_0588 (230 aa).

This sequence belongs to the UPF0173 family.

The polypeptide is UPF0173 metal-dependent hydrolase RSKD131_0588 (Cereibacter sphaeroides (strain KD131 / KCTC 12085) (Rhodobacter sphaeroides)).